Here is a 1783-residue protein sequence, read N- to C-terminus: uncharacterized protein (1783 aa).

The chain crosses the membrane as a helical span at residues Phe16 to Ile36. Low complexity predominate over residues Gly105 to Asn119. A disordered region spans residues Gly105 to Lys125. The next 8 helical transmembrane spans lie at Val917–Ile937, Val967–Leu987, Trp1010–Ile1030, Leu1084–Ile1104, Phe1660–Met1680, Phe1709–Ile1729, Gly1730–Leu1750, and Tyr1752–Ile1772.

It belongs to the ABC-4 integral membrane protein family.

It localises to the cell membrane. This is an uncharacterized protein from Mycoplasma genitalium (strain ATCC 33530 / DSM 19775 / NCTC 10195 / G37) (Mycoplasmoides genitalium).